Consider the following 498-residue polypeptide: MKTIHFDMNKYETHVDLEYLKEHGRVEKISDGVIFCSGLENAALHQAVLIDERHRGVILELNEEFVGIGLIDKTNDILEGMHVGVSGKFIEVDLFEEMAGRVIDTTGKMLYEESEEKPTATSPLFCVTPAIMTIDSVTRPLNTGLAVIDSITPIGRGQRQLILGNRQSGKTQIAVDTIINQHDQNVHCIYVAIGLKAAYIAEVIETLRNHGAMEYSTVVATAASDSLTAQYLTPYAGMAVAEALRDQGKDVLIILDDLTKHADAYRAITLLFNRPPGREAYPGDSFYIHSSLLERAVQMNEEHGGGSITAIPMIETLSDDVTAYIPTNVISITDGQLFLKSDLFNRGQKPAVDVGVSVSRIGGDAQHPIIRKLSKNLTLILSQFEELKELLDFGNALDDGSMKMVSDGRLLTELFKQKILSPLSVTELIVILYAFQNGFLTKIPPANIQTFKDLLLEKAHMHKDFESFSAQIETINELNESHIEMLEEIIREAGRLFS.

The protein belongs to the ATPase alpha/beta chains family. As to quaternary structure, F-type ATPases have 2 components, CF(1) - the catalytic core - and CF(0) - the membrane proton channel. CF(1) has five subunits: alpha(3), beta(3), gamma(1), delta(1), epsilon(1). CF(0) has three main subunits: a(1), b(2) and c(9-12). The alpha and beta chains form an alternating ring which encloses part of the gamma chain. CF(1) is attached to CF(0) by a central stalk formed by the gamma and epsilon chains, while a peripheral stalk is formed by the delta and b chains.

Its subcellular location is the cell membrane. The enzyme catalyses ATP + H2O + 4 H(+)(in) = ADP + phosphate + 5 H(+)(out). Produces ATP from ADP in the presence of a proton gradient across the membrane. The alpha chain is a regulatory subunit. The sequence is that of ATP synthase subunit alpha 1 from Listeria monocytogenes serotype 4b (strain F2365).